A 119-amino-acid chain; its full sequence is Holo-[acyl-carrier-protein] synthase (119 aa).

Mg(2+) is bound by residues Asp8 and Glu58.

The protein belongs to the P-Pant transferase superfamily. AcpS family. It depends on Mg(2+) as a cofactor.

Its subcellular location is the cytoplasm. The enzyme catalyses apo-[ACP] + CoA = holo-[ACP] + adenosine 3',5'-bisphosphate + H(+). Functionally, transfers the 4'-phosphopantetheine moiety from coenzyme A to a Ser of acyl-carrier-protein. The protein is Holo-[acyl-carrier-protein] synthase of Streptococcus suis (strain 05ZYH33).